Consider the following 118-residue polypeptide: Large ribosomal subunit protein bL20 (118 aa).

It belongs to the bacterial ribosomal protein bL20 family.

Functionally, binds directly to 23S ribosomal RNA and is necessary for the in vitro assembly process of the 50S ribosomal subunit. It is not involved in the protein synthesizing functions of that subunit. This is Large ribosomal subunit protein bL20 from Stutzerimonas stutzeri (strain A1501) (Pseudomonas stutzeri).